A 119-amino-acid polypeptide reads, in one-letter code: Small ribosomal subunit protein uS13 (119 aa).

Basic residues predominate over residues 92–110; that stretch reads RKDTCKRSTKKNARTRKGP. Residues 92–119 are disordered; sequence RKDTCKRSTKKNARTRKGPKKDNRWKER.

It belongs to the universal ribosomal protein uS13 family. Part of the 30S ribosomal subunit. Forms a loose heterodimer with protein S19. Forms two bridges to the 50S subunit in the 70S ribosome.

Its function is as follows. Located at the top of the head of the 30S subunit, it contacts several helices of the 16S rRNA. In the 70S ribosome it contacts the 23S rRNA (bridge B1a) and protein L5 of the 50S subunit (bridge B1b), connecting the 2 subunits; these bridges are implicated in subunit movement. Contacts the tRNAs in the A and P-sites. This is Small ribosomal subunit protein uS13 from Mycoplasma sp.